The chain runs to 306 residues: NAD kinase 1 (306 aa).

Asp-67 serves as the catalytic Proton acceptor. NAD(+) is bound by residues 67–68, 149–150, and Asp-181; these read DG and NE.

Belongs to the NAD kinase family. A divalent metal cation is required as a cofactor.

The protein resides in the cytoplasm. The catalysed reaction is NAD(+) + ATP = ADP + NADP(+) + H(+). Its function is as follows. Involved in the regulation of the intracellular balance of NAD and NADP, and is a key enzyme in the biosynthesis of NADP. Catalyzes specifically the phosphorylation on 2'-hydroxyl of the adenosine moiety of NAD to yield NADP. The protein is NAD kinase 1 of Thermosynechococcus vestitus (strain NIES-2133 / IAM M-273 / BP-1).